The following is a 101-amino-acid chain: Urease subunit beta (101 aa).

The protein belongs to the urease beta subunit family. In terms of assembly, heterotrimer of UreA (gamma), UreB (beta) and UreC (alpha) subunits. Three heterotrimers associate to form the active enzyme.

It localises to the cytoplasm. It carries out the reaction urea + 2 H2O + H(+) = hydrogencarbonate + 2 NH4(+). It participates in nitrogen metabolism; urea degradation; CO(2) and NH(3) from urea (urease route): step 1/1. The sequence is that of Urease subunit beta from Ectopseudomonas mendocina (strain ymp) (Pseudomonas mendocina).